Reading from the N-terminus, the 426-residue chain is Glutamyl-tRNA reductase (426 aa).

Substrate contacts are provided by residues 49–52, serine 109, 114–116, and glutamine 120; these read TCNR and EGQ. Cysteine 50 (nucleophile) is an active-site residue. Residue 189-194 coordinates NADP(+); it reads GAGETG.

This sequence belongs to the glutamyl-tRNA reductase family. As to quaternary structure, homodimer.

The catalysed reaction is (S)-4-amino-5-oxopentanoate + tRNA(Glu) + NADP(+) = L-glutamyl-tRNA(Glu) + NADPH + H(+). It functions in the pathway porphyrin-containing compound metabolism; protoporphyrin-IX biosynthesis; 5-aminolevulinate from L-glutamyl-tRNA(Glu): step 1/2. Catalyzes the NADPH-dependent reduction of glutamyl-tRNA(Glu) to glutamate 1-semialdehyde (GSA). This Chlorobaculum parvum (strain DSM 263 / NCIMB 8327) (Chlorobium vibrioforme subsp. thiosulfatophilum) protein is Glutamyl-tRNA reductase (hemA).